The chain runs to 430 residues: 3-phosphoshikimate 1-carboxyvinyltransferase (430 aa).

Residues K25, S26, and R30 each coordinate 3-phosphoshikimate. K25 contacts phosphoenolpyruvate. Phosphoenolpyruvate contacts are provided by G98 and R126. S169, S170, Q171, S198, E313, and H342 together coordinate 3-phosphoshikimate. Position 171 (Q171) interacts with phosphoenolpyruvate. Catalysis depends on E313, which acts as the Proton acceptor. Positions 346, 387, and 412 each coordinate phosphoenolpyruvate.

The protein belongs to the EPSP synthase family. As to quaternary structure, monomer.

The protein localises to the cytoplasm. It carries out the reaction 3-phosphoshikimate + phosphoenolpyruvate = 5-O-(1-carboxyvinyl)-3-phosphoshikimate + phosphate. The protein operates within metabolic intermediate biosynthesis; chorismate biosynthesis; chorismate from D-erythrose 4-phosphate and phosphoenolpyruvate: step 6/7. In terms of biological role, catalyzes the transfer of the enolpyruvyl moiety of phosphoenolpyruvate (PEP) to the 5-hydroxyl of shikimate-3-phosphate (S3P) to produce enolpyruvyl shikimate-3-phosphate and inorganic phosphate. This Mycobacterium leprae (strain TN) protein is 3-phosphoshikimate 1-carboxyvinyltransferase.